The primary structure comprises 148 residues: Augurin (148 aa).

A signal peptide spans 1–31 (MSTSSARPAVLALAGLALLLLLCLGPDGISG). 2 consecutive propeptides follow at residues 32 to 70 (NKLK…RAKR) and 133 to 148 (SRES…YNDY).

The protein belongs to the augurin family. In terms of tissue distribution, expressed in the intermediate lobe of pituitary, glomerular layer of adrenal cortex, choroid plexus and atrioventricular node of the heart. Expressed in the brain with high expression in the choroid plexus and the epithelial lining of the central canal and expression in the gray matter of the spinal cord (at protein level).

Its subcellular location is the secreted. The protein resides in the cytoplasm. The protein localises to the apical cell membrane. Its function is as follows. Probable hormone that may attenuate cell proliferation and induce senescence of oligodendrocyte and neural precursor cells in the central nervous system. ECRG4-induced senescence is characterized by G1 arrest, RB1 dephosphorylation and accelerated CCND1 and CCND3 proteasomal degradation. The polypeptide is Augurin (Mus musculus (Mouse)).